The primary structure comprises 66 residues: DNA-directed RNA polymerase subunit omega (66 aa).

Belongs to the RNA polymerase subunit omega family. In terms of assembly, the RNAP catalytic core consists of 2 alpha, 1 beta, 1 beta' and 1 omega subunit. When a sigma factor is associated with the core the holoenzyme is formed, which can initiate transcription.

The enzyme catalyses RNA(n) + a ribonucleoside 5'-triphosphate = RNA(n+1) + diphosphate. Its function is as follows. Promotes RNA polymerase assembly. Latches the N- and C-terminal regions of the beta' subunit thereby facilitating its interaction with the beta and alpha subunits. In Geobacillus kaustophilus (strain HTA426), this protein is DNA-directed RNA polymerase subunit omega.